The primary structure comprises 367 residues: Germination protease (367 aa).

A propeptide spanning residues 1–15 (MKEPLDLSKYSVRTD) is cleaved from the precursor.

This sequence belongs to the peptidase A25 family. Homotetramer. Autoproteolytically processed. The inactive tetrameric zymogen termed p46 autoprocesses to a smaller form termed p41, which is active only during spore germination.

It catalyses the reaction Endopeptidase action with P4 Glu or Asp, P1 preferably Glu &gt; Asp, P1' hydrophobic and P2' Ala.. Functionally, initiates the rapid degradation of small, acid-soluble proteins during spore germination. The sequence is that of Germination protease from Bacillus thuringiensis subsp. konkukian (strain 97-27).